The following is a 247-amino-acid chain: 3-deoxy-manno-octulosonate cytidylyltransferase (247 aa).

The protein belongs to the KdsB family.

The protein localises to the cytoplasm. The catalysed reaction is 3-deoxy-alpha-D-manno-oct-2-ulosonate + CTP = CMP-3-deoxy-beta-D-manno-octulosonate + diphosphate. It functions in the pathway nucleotide-sugar biosynthesis; CMP-3-deoxy-D-manno-octulosonate biosynthesis; CMP-3-deoxy-D-manno-octulosonate from 3-deoxy-D-manno-octulosonate and CTP: step 1/1. Its pathway is bacterial outer membrane biogenesis; lipopolysaccharide biosynthesis. Functionally, activates KDO (a required 8-carbon sugar) for incorporation into bacterial lipopolysaccharide in Gram-negative bacteria. In Rhodopseudomonas palustris (strain BisA53), this protein is 3-deoxy-manno-octulosonate cytidylyltransferase.